Here is a 318-residue protein sequence, read N- to C-terminus: Tyrosine recombinase XerC (318 aa).

The Core-binding (CB) domain occupies 17 to 108 (PEVMAERRRW…GLRSFLRYLE (92 aa)). The region spanning 129–312 (SLPKALTDRE…DSARLLEIYD (184 aa)) is the Tyr recombinase domain. Active-site residues include arginine 172, lysine 196, histidine 264, arginine 267, and histidine 290. The active-site O-(3'-phospho-DNA)-tyrosine intermediate is the tyrosine 299.

Belongs to the 'phage' integrase family. XerC subfamily. As to quaternary structure, forms a cyclic heterotetrameric complex composed of two molecules of XerC and two molecules of XerD.

It is found in the cytoplasm. In terms of biological role, site-specific tyrosine recombinase, which acts by catalyzing the cutting and rejoining of the recombining DNA molecules. The XerC-XerD complex is essential to convert dimers of the bacterial chromosome into monomers to permit their segregation at cell division. It also contributes to the segregational stability of plasmids. This Rhizobium meliloti (strain 1021) (Ensifer meliloti) protein is Tyrosine recombinase XerC.